Here is a 155-residue protein sequence, read N- to C-terminus: Small ribosomal subunit protein uS7cz/uS7cy (155 aa).

Belongs to the universal ribosomal protein uS7 family. Part of the 30S ribosomal subunit.

The protein resides in the plastid. It is found in the chloroplast. Its function is as follows. One of the primary rRNA binding proteins, it binds directly to 16S rRNA where it nucleates assembly of the head domain of the 30S subunit. This chain is Small ribosomal subunit protein uS7cz/uS7cy (rps7-A), found in Calycanthus floridus var. glaucus (Eastern sweetshrub).